The sequence spans 108 residues: Parvalbumin beta (108 aa).

A1 carries the post-translational modification N-acetylalanine. EF-hand domains lie at 38 to 73 and 77 to 108; these read KSNEELEAIFKILDQDKSGFIEDEELELFLQNFSAG and LTKTETETFLKAGDSDGDGKIGVDEFQKLVKA. The Ca(2+) site is built by D51, D53, S55, F57, E59, E62, D90, D92, D94, K96, and E101.

It belongs to the parvalbumin family.

Its function is as follows. In muscle, parvalbumin is thought to be involved in relaxation after contraction. It binds two calcium ions. This is Parvalbumin beta from Latimeria chalumnae (Coelacanth).